The primary structure comprises 80 residues: RNA-binding protein KhpA (80 aa).

One can recognise a KH domain in the interval glycine 33–glutamine 80.

The protein belongs to the KhpA RNA-binding protein family.

Its subcellular location is the cytoplasm. A probable RNA-binding protein. This is RNA-binding protein KhpA from Mycobacterium bovis (strain ATCC BAA-935 / AF2122/97).